Reading from the N-terminus, the 146-residue chain is Large ribosomal subunit protein uL15 (146 aa).

The segment covering 1-13 (MKLHELKPAEGSR) has biased composition (basic and acidic residues). A disordered region spans residues 1 to 51 (MKLHELKPAEGSRKVRNRVGRGTSSGNGKTSGRGQKGQKARSGGGVRLGFE). Composition is skewed to gly residues over residues 23–35 (TSSG…GRGQ) and 42–51 (SGGGVRLGFE).

It belongs to the universal ribosomal protein uL15 family. In terms of assembly, part of the 50S ribosomal subunit.

In terms of biological role, binds to the 23S rRNA. The chain is Large ribosomal subunit protein uL15 from Streptococcus pneumoniae serotype 2 (strain D39 / NCTC 7466).